Here is a 358-residue protein sequence, read N- to C-terminus: tRNA-specific 2-thiouridylase MnmA (358 aa).

ATP contacts are provided by residues 6–13 (AMSGGVDS) and Leu32. Cys101 serves as the catalytic Nucleophile. A disulfide bond links Cys101 and Cys193. Gly125 serves as a coordination point for ATP. Residues 143-145 (KDQ) are interaction with tRNA. Residue Cys193 is the Cysteine persulfide intermediate of the active site.

This sequence belongs to the MnmA/TRMU family.

The protein localises to the cytoplasm. The catalysed reaction is S-sulfanyl-L-cysteinyl-[protein] + uridine(34) in tRNA + AH2 + ATP = 2-thiouridine(34) in tRNA + L-cysteinyl-[protein] + A + AMP + diphosphate + H(+). In terms of biological role, catalyzes the 2-thiolation of uridine at the wobble position (U34) of tRNA, leading to the formation of s(2)U34. This chain is tRNA-specific 2-thiouridylase MnmA, found in Mycobacterium leprae (strain Br4923).